The chain runs to 344 residues: tRNA N6-adenosine threonylcarbamoyltransferase (344 aa).

Fe cation is bound by residues histidine 111 and histidine 115. Substrate contacts are provided by residues 134–138, aspartate 167, glycine 180, and asparagine 274; that span reads LVSGG. Fe cation is bound at residue aspartate 302.

This sequence belongs to the KAE1 / TsaD family. It depends on Fe(2+) as a cofactor.

It is found in the cytoplasm. The enzyme catalyses L-threonylcarbamoyladenylate + adenosine(37) in tRNA = N(6)-L-threonylcarbamoyladenosine(37) in tRNA + AMP + H(+). Its function is as follows. Required for the formation of a threonylcarbamoyl group on adenosine at position 37 (t(6)A37) in tRNAs that read codons beginning with adenine. Is involved in the transfer of the threonylcarbamoyl moiety of threonylcarbamoyl-AMP (TC-AMP) to the N6 group of A37, together with TsaE and TsaB. TsaD likely plays a direct catalytic role in this reaction. The sequence is that of tRNA N6-adenosine threonylcarbamoyltransferase from Dechloromonas aromatica (strain RCB).